The chain runs to 242 residues: HTH domain-truncated transcriptional regulator QseD (242 aa).

It belongs to the LysR transcriptional regulatory family.

Its function is as follows. Represses EHEC virulence expression. Down-regulates expression of LEE (locus of enterocyte effacement) and iraD genes, and alters AE (attaching and effacing) lesion formation. May regulate transcription through interactions with another HTH DNA-binding protein. The sequence is that of HTH domain-truncated transcriptional regulator QseD (qseD) from Escherichia coli O157:H7.